The sequence spans 141 residues: Ribonuclease P protein component (141 aa).

Disordered stretches follow at residues 37 to 56 (RTEE…VGFT) and 114 to 141 (RRIT…VNGK). Residues 114 to 123 (RRITAKGERR) are compositionally biased toward basic and acidic residues.

Belongs to the RnpA family. Consists of a catalytic RNA component (M1 or rnpB) and a protein subunit.

It carries out the reaction Endonucleolytic cleavage of RNA, removing 5'-extranucleotides from tRNA precursor.. In terms of biological role, RNaseP catalyzes the removal of the 5'-leader sequence from pre-tRNA to produce the mature 5'-terminus. It can also cleave other RNA substrates such as 4.5S RNA. The protein component plays an auxiliary but essential role in vivo by binding to the 5'-leader sequence and broadening the substrate specificity of the ribozyme. The polypeptide is Ribonuclease P protein component (Brucella suis biovar 1 (strain 1330)).